A 619-amino-acid polypeptide reads, in one-letter code: ATP-dependent DNA helicase RecQ (619 aa).

The Helicase ATP-binding domain maps to Ile37 to His205. Met50–Ser57 serves as a coordination point for ATP. Positions Asp149 to His152 match the DEAH box motif. Residues Gln229–Ile374 form the Helicase C-terminal domain. Residues Cys383, Cys400, Cys403, and Cys406 each contribute to the Zn(2+) site. Residues Ala535–Ala615 enclose the HRDC domain.

This sequence belongs to the helicase family. RecQ subfamily. Mg(2+) serves as cofactor. Zn(2+) is required as a cofactor.

It carries out the reaction Couples ATP hydrolysis with the unwinding of duplex DNA by translocating in the 3'-5' direction.. The enzyme catalyses ATP + H2O = ADP + phosphate + H(+). In terms of biological role, an ATP-dependent DNA helicase which unwinds DNA in a 3'-5' direction. Plays a role in recombination. The sequence is that of ATP-dependent DNA helicase RecQ from Haemophilus influenzae (strain ATCC 51907 / DSM 11121 / KW20 / Rd).